An 87-amino-acid polypeptide reads, in one-letter code: MYCLQWLLPVLLIPKPLNPALWFSHSMFMGFYLLSFLLERKPCTICALVFLAALFLICYSCWGNCFLYHCSDSPLPESAHDPGVVGT.

The next 2 helical transmembrane spans lie at 19 to 39 (PALWFSHSMFMGFYLLSFLLE) and 43 to 63 (CTICALVFLAALFLICYSCWG).

Belongs to the BLCAP family. As to quaternary structure, interacts with RB1 (phosphorylated and unphosphorylated). Interacts with STAT3; the interaction is promoted by cell stimulation with IL6 and phosphorylation of STAT3.

The protein resides in the cytoplasm. Its subcellular location is the nucleus. It localises to the membrane. In terms of biological role, acts as a tumor suppressor; induces growth arrest at G(1)/S checkpoint and apoptosis via RB1-dependent and p53/TP53- and NF-kappa-B-independent mechanisms. Modulates expression of genes involved in the regulation of proliferation, cell cycle and apoptosis. In Bos taurus (Bovine), this protein is Apoptosis inducing factor BLCAP (BLCAP).